Here is a 981-residue protein sequence, read N- to C-terminus: Bifunctional glutamine synthetase adenylyltransferase/adenylyl-removing enzyme (981 aa).

The interval 1 to 473 (MTMPLPSIEQ…RSVFNNLIGF (473 aa)) is adenylyl removase. Residues 479–981 (ADDSDNAWSD…HQIWQKLFFE (503 aa)) form an adenylyl transferase region.

It belongs to the GlnE family. Mg(2+) serves as cofactor.

The catalysed reaction is [glutamine synthetase]-O(4)-(5'-adenylyl)-L-tyrosine + phosphate = [glutamine synthetase]-L-tyrosine + ADP. It catalyses the reaction [glutamine synthetase]-L-tyrosine + ATP = [glutamine synthetase]-O(4)-(5'-adenylyl)-L-tyrosine + diphosphate. In terms of biological role, involved in the regulation of glutamine synthetase GlnA, a key enzyme in the process to assimilate ammonia. When cellular nitrogen levels are high, the C-terminal adenylyl transferase (AT) inactivates GlnA by covalent transfer of an adenylyl group from ATP to specific tyrosine residue of GlnA, thus reducing its activity. Conversely, when nitrogen levels are low, the N-terminal adenylyl removase (AR) activates GlnA by removing the adenylyl group by phosphorolysis, increasing its activity. The regulatory region of GlnE binds the signal transduction protein PII (GlnB) which indicates the nitrogen status of the cell. The chain is Bifunctional glutamine synthetase adenylyltransferase/adenylyl-removing enzyme from Mannheimia succiniciproducens (strain KCTC 0769BP / MBEL55E).